Consider the following 51-residue polypeptide: MRDKIKLVSTAGTGYYYTTTKNKRTMPGKMEIKKFDPKVRQHVIFKEAKIK.

The protein belongs to the bacterial ribosomal protein bL33 family.

In Psychrobacter arcticus (strain DSM 17307 / VKM B-2377 / 273-4), this protein is Large ribosomal subunit protein bL33.